We begin with the raw amino-acid sequence, 200 residues long: Glycerol-3-phosphate acyltransferase (200 aa).

4 consecutive transmembrane segments (helical) span residues 1–21 (MITV…FAVV), 84–104 (VIAG…FLAF), 116–136 (ILLG…MVVA), and 159–179 (FLLE…LLIL).

This sequence belongs to the PlsY family. Probably interacts with PlsX.

It is found in the cell inner membrane. The enzyme catalyses an acyl phosphate + sn-glycerol 3-phosphate = a 1-acyl-sn-glycero-3-phosphate + phosphate. It participates in lipid metabolism; phospholipid metabolism. Catalyzes the transfer of an acyl group from acyl-phosphate (acyl-PO(4)) to glycerol-3-phosphate (G3P) to form lysophosphatidic acid (LPA). This enzyme utilizes acyl-phosphate as fatty acyl donor, but not acyl-CoA or acyl-ACP. The chain is Glycerol-3-phosphate acyltransferase from Nitrosomonas europaea (strain ATCC 19718 / CIP 103999 / KCTC 2705 / NBRC 14298).